A 657-amino-acid polypeptide reads, in one-letter code: Glycogen debranching enzyme (657 aa).

Catalysis depends on Asp336, which acts as the Nucleophile. Residue Glu371 is the Proton donor of the active site. Positions 458–467 (NEANGEENRD) are enriched in basic and acidic residues. A disordered region spans residues 458-479 (NEANGEENRDGTNNNYSNNHGK).

This sequence belongs to the glycosyl hydrolase 13 family.

It catalyses the reaction Hydrolysis of (1-&gt;6)-alpha-D-glucosidic linkages to branches with degrees of polymerization of three or four glucose residues in limit dextrin.. It functions in the pathway glycan degradation; glycogen degradation. In terms of biological role, removes maltotriose and maltotetraose chains that are attached by 1,6-alpha-linkage to the limit dextrin main chain, generating a debranched limit dextrin. The sequence is that of Glycogen debranching enzyme from Shigella boydii serotype 18 (strain CDC 3083-94 / BS512).